The sequence spans 403 residues: MDKLSIRDLSLEGKKVLVRVDFNVPIKDGKILDDVRIRSAMPTIHYLLKQDAAVILVSHLGRPKGGVFEEAYSLAPIVPVLEGYLGHHVPLSPDCIGEVARQAVAQLSPGRVLLLENVRFHKGEEHPDEDPSFAIELAAYADFYVNDAFGTSHRKHASVYRVPQLFPDRAAAGFLMEKELEFLGQHLLVEPKRPFTAILGGAKMSSKIGVIEALLSCVDHLVLAGGMGYTFLRAINRQVGNSLVEESGIPLAKKVLEKAQALGVKIHLPVDAKVAKQCDSGEDWRELSIQEGIPEGLAGFDIGAQTIELFSKVIQESATIFWNGPVGVYEVPPFDQGSKAIAQCLASHSSAVTVVGGGDAAAVVALAGCASQISHVSTGGGASLEFLEKSSLPGTEILSPAQS.

Substrate is bound by residues 21–23 (DFN), Arg-36, 59–62 (HLGR), Arg-119, and Arg-154. Residues Lys-207, Gly-299, Glu-330, and 357-360 (GGDA) contribute to the ATP site.

Belongs to the phosphoglycerate kinase family. Monomer.

The protein localises to the cytoplasm. It catalyses the reaction (2R)-3-phosphoglycerate + ATP = (2R)-3-phospho-glyceroyl phosphate + ADP. It functions in the pathway carbohydrate degradation; glycolysis; pyruvate from D-glyceraldehyde 3-phosphate: step 2/5. The polypeptide is Phosphoglycerate kinase (Chlamydia trachomatis serovar A (strain ATCC VR-571B / DSM 19440 / HAR-13)).